We begin with the raw amino-acid sequence, 217 residues long: Transmembrane emp24 domain-containing protein p24delta6 (217 aa).

A signal peptide spans 1–26 (MAISPVLFIGLIYLAGGGSLFPGVEA). At 27 to 186 (IWLTVPESGE…INEKTNTRVN (160 aa)) the chain is on the lumenal side. The GOLD domain maps to 36–152 (ERCVYEEIQA…IEGVELEIRR (117 aa)). N-linked (GlcNAc...) asparagine glycosylation is found at Asn-84 and Asn-116. A coiled-coil region spans residues 138–160 (AKKEKIEGVELEIRRSTEYASAI). Omega-N-methylated arginine occurs at positions 170 and 175. The chain crosses the membrane as a helical span at residues 187 to 207 (QLGLMSLGVAIVVSISQVLYL). Residues 208–217 (KRYFLKKKLI) are Cytoplasmic-facing. Positions 210-211 (YF) match the COPII vesicle coat-binding motif. Residues 210–217 (YFLKKKLI) carry the COPI vesicle coat-binding motif.

This sequence belongs to the EMP24/GP25L family. As to quaternary structure, probably oligomerizes with other members of the EMP24/GP25L family. Associates with the COPI vesicle coat (coatomer). Associates with the COPII vesicle coat (coatomer).

The protein localises to the endoplasmic reticulum membrane. In terms of biological role, involved in vesicular protein trafficking. Mainly functions in the early secretory pathway. Thought to act as cargo receptor at the lumenal side for incorporation of secretory cargo molecules into transport vesicles and to be involved in vesicle coat formation at the cytoplasmic side. The sequence is that of Transmembrane emp24 domain-containing protein p24delta6 from Arabidopsis thaliana (Mouse-ear cress).